Reading from the N-terminus, the 389-residue chain is GTPase Obg (389 aa).

The 159-residue stretch at 1 to 159 (MKFVDEAKIL…REVLLELMLL (159 aa)) folds into the Obg domain. Residues 160 to 333 (ADVGMLGMPN…LCWDIMEFLK (174 aa)) form the OBG-type G domain. Residues 166 to 173 (GMPNAGKS), 191 to 195 (FTTLV), 213 to 216 (DIPG), 283 to 286 (NKVD), and 314 to 316 (AAI) each bind GTP. Positions 173 and 193 each coordinate Mg(2+). Residues 362–389 (QLENPDLEDDDEDWDEEDDDGVEFIYQR) form a disordered region. A compositionally biased stretch (acidic residues) spans 364 to 383 (ENPDLEDDDEDWDEEDDDGV).

It belongs to the TRAFAC class OBG-HflX-like GTPase superfamily. OBG GTPase family. Monomer. The cofactor is Mg(2+).

It localises to the cytoplasm. In terms of biological role, an essential GTPase which binds GTP, GDP and possibly (p)ppGpp with moderate affinity, with high nucleotide exchange rates and a fairly low GTP hydrolysis rate. Plays a role in control of the cell cycle, stress response, ribosome biogenesis and in those bacteria that undergo differentiation, in morphogenesis control. The protein is GTPase Obg of Proteus mirabilis (strain HI4320).